We begin with the raw amino-acid sequence, 86 residues long: Putative membrane protein insertion efficiency factor (86 aa).

The interval 66–86 is disordered; sequence PLHEGGDDPVPPRKNDDNREN.

Belongs to the UPF0161 family.

The protein localises to the cell inner membrane. In terms of biological role, could be involved in insertion of integral membrane proteins into the membrane. In Proteus mirabilis (strain HI4320), this protein is Putative membrane protein insertion efficiency factor.